We begin with the raw amino-acid sequence, 354 residues long: uncharacterized protein (354 aa).

It belongs to the band 7/mec-2 family.

The protein resides in the mitochondrion. This is an uncharacterized protein from Schizosaccharomyces pombe (strain 972 / ATCC 24843) (Fission yeast).